Here is a 214-residue protein sequence, read N- to C-terminus: Outer-membrane lipoprotein LolB (214 aa).

Residues 1–30 form the signal peptide; it reads MKHVSSPHPCAAIASARVWLGLVLVALLAG. A lipid anchor (N-palmitoyl cysteine) is attached at Cys31. Residue Cys31 is the site of S-diacylglycerol cysteine attachment.

This sequence belongs to the LolB family. In terms of assembly, monomer.

The protein resides in the cell outer membrane. Its function is as follows. Plays a critical role in the incorporation of lipoproteins in the outer membrane after they are released by the LolA protein. This is Outer-membrane lipoprotein LolB from Chromohalobacter salexigens (strain ATCC BAA-138 / DSM 3043 / CIP 106854 / NCIMB 13768 / 1H11).